A 604-amino-acid polypeptide reads, in one-letter code: Glutamine--fructose-6-phosphate aminotransferase [isomerizing] (604 aa).

The Nucleophile; for GATase activity role is filled by Cys-2. The 218-residue stretch at 2-219 (CGIMGAVSER…EGDSACVTTQ (218 aa)) folds into the Glutamine amidotransferase type-2 domain. 2 SIS domains span residues 279–427 (LRAS…DNRA) and 454–594 (LASL…VDQP). Lys-599 serves as the catalytic For Fru-6P isomerization activity.

In terms of assembly, homodimer.

Its subcellular location is the cytoplasm. The catalysed reaction is D-fructose 6-phosphate + L-glutamine = D-glucosamine 6-phosphate + L-glutamate. In terms of biological role, catalyzes the first step in hexosamine metabolism, converting fructose-6P into glucosamine-6P using glutamine as a nitrogen source. The protein is Glutamine--fructose-6-phosphate aminotransferase [isomerizing] of Legionella pneumophila (strain Paris).